A 356-amino-acid chain; its full sequence is tRNA N6-adenosine threonylcarbamoyltransferase (356 aa).

Fe cation is bound by residues histidine 115 and histidine 119. Residues 138 to 142 (LVSGG), aspartate 171, glycine 184, and asparagine 283 each bind substrate. Aspartate 311 lines the Fe cation pocket.

Belongs to the KAE1 / TsaD family. Fe(2+) is required as a cofactor.

It localises to the cytoplasm. The catalysed reaction is L-threonylcarbamoyladenylate + adenosine(37) in tRNA = N(6)-L-threonylcarbamoyladenosine(37) in tRNA + AMP + H(+). Its function is as follows. Required for the formation of a threonylcarbamoyl group on adenosine at position 37 (t(6)A37) in tRNAs that read codons beginning with adenine. Is involved in the transfer of the threonylcarbamoyl moiety of threonylcarbamoyl-AMP (TC-AMP) to the N6 group of A37, together with TsaE and TsaB. TsaD likely plays a direct catalytic role in this reaction. The chain is tRNA N6-adenosine threonylcarbamoyltransferase from Prochlorococcus marinus (strain SARG / CCMP1375 / SS120).